We begin with the raw amino-acid sequence, 90 residues long: UPF0512 protein L (90 aa).

It belongs to the UPF0512 family.

This chain is UPF0512 protein L, found in Dictyostelium discoideum (Social amoeba).